A 198-amino-acid chain; its full sequence is Recombination protein RecR (198 aa).

The segment at cysteine 57–cysteine 72 adopts a C4-type zinc-finger fold. The Toprim domain maps to threonine 80 to proline 175.

It belongs to the RecR family.

In terms of biological role, may play a role in DNA repair. It seems to be involved in an RecBC-independent recombinational process of DNA repair. It may act with RecF and RecO. This is Recombination protein RecR from Paraburkholderia phymatum (strain DSM 17167 / CIP 108236 / LMG 21445 / STM815) (Burkholderia phymatum).